Here is a 376-residue protein sequence, read N- to C-terminus: 28S rRNA (uridine-N(3))-methyltransferase (376 aa).

Disordered stretches follow at residues 1 to 33 (MAERGRKRPCGPGEHGQRIEWRKWKQQKKEEKK) and 49 to 71 (AQEEQAKRLEEEEAAAEKEDRGR). The segment covering 15 to 33 (HGQRIEWRKWKQQKKEEKK) has biased composition (basic and acidic residues). Threonine 289, arginine 292, glycine 312, asparagine 341, and threonine 342 together coordinate S-adenosyl-L-homocysteine. The S-adenosyl-L-methionine site is built by arginine 292, glycine 312, asparagine 341, and threonine 342.

It belongs to the class IV-like SAM-binding methyltransferase superfamily. Interacts with INCA1.

The protein localises to the cytoplasm. Its subcellular location is the cytoskeleton. It is found in the spindle. The protein resides in the chromosome. It localises to the centromere. The protein localises to the kinetochore. Its subcellular location is the microtubule organizing center. It is found in the centrosome. It catalyses the reaction uridine in 28S rRNA + S-adenosyl-L-methionine = N(3)-methyluridine in 28S rRNA + S-adenosyl-L-homocysteine + H(+). Functionally, S-adenosyl-L-methionine-dependent methyltransferase that specifically methylates the N3 position of a uridine in 28S rRNA. Required for association of the centrosomes with the poles of the bipolar mitotic spindle during metaphase. Also involved in chromosome alignment. May promote centrosome maturation probably by recruiting A-kinase anchor protein AKAP9 to centrosomes in early mitosis. Binds specifically to miRNA MIR145 hairpin, regulates MIR145 expression at a postranscriptional level. This Homo sapiens (Human) protein is 28S rRNA (uridine-N(3))-methyltransferase.